The chain runs to 534 residues: CTP synthase (534 aa).

An amidoligase domain region spans residues 1-269 (MHVSNSKFIF…DKIIIDAFRL (269 aa)). S17 provides a ligand contact to CTP. S17 is a binding site for UTP. Position 18-23 (18-23 (SLGKGV)) interacts with ATP. Position 58 (Y58) interacts with L-glutamine. D75 is a binding site for ATP. 2 residues coordinate Mg(2+): D75 and E143. CTP contacts are provided by residues 150–152 (DIE), 190–195 (KTKPTQ), and K226. Residues 190–195 (KTKPTQ) and K226 contribute to the UTP site. The 239-residue stretch at 294–532 (DIAIVGKYIK…IENAYIYKKE (239 aa)) folds into the Glutamine amidotransferase type-1 domain. G352 serves as a coordination point for L-glutamine. The Nucleophile; for glutamine hydrolysis role is filled by C379. L-glutamine contacts are provided by residues 380-383 (LGMQ), E403, and R460. Catalysis depends on residues H505 and E507.

Belongs to the CTP synthase family. Homotetramer.

The catalysed reaction is UTP + L-glutamine + ATP + H2O = CTP + L-glutamate + ADP + phosphate + 2 H(+). It carries out the reaction L-glutamine + H2O = L-glutamate + NH4(+). The enzyme catalyses UTP + NH4(+) + ATP = CTP + ADP + phosphate + 2 H(+). It functions in the pathway pyrimidine metabolism; CTP biosynthesis via de novo pathway; CTP from UDP: step 2/2. Allosterically activated by GTP, when glutamine is the substrate; GTP has no effect on the reaction when ammonia is the substrate. The allosteric effector GTP functions by stabilizing the protein conformation that binds the tetrahedral intermediate(s) formed during glutamine hydrolysis. Inhibited by the product CTP, via allosteric rather than competitive inhibition. Its function is as follows. Catalyzes the ATP-dependent amination of UTP to CTP with either L-glutamine or ammonia as the source of nitrogen. Regulates intracellular CTP levels through interactions with the four ribonucleotide triphosphates. In Hydrogenobaculum sp. (strain Y04AAS1), this protein is CTP synthase.